The following is a 114-amino-acid chain: Fluoride-specific ion channel FluC 1 (114 aa).

Helical transmembrane passes span 3–23 (IDIKNNTFFLISLGAFLGALF), 30–50 (IFIVNLIGCFLLGFFNSLNIL), 55–75 (LTLCVGLCGSMTTFSSWMSHL), and 87–107 (FLLNSLSIVLMGVLSIALGHI). Na(+) is bound by residues Gly-63 and Thr-66.

Belongs to the fluoride channel Fluc/FEX (TC 1.A.43) family.

Its subcellular location is the cell inner membrane. It carries out the reaction fluoride(in) = fluoride(out). Na(+) is not transported, but it plays an essential structural role and its presence is essential for fluoride channel function. Its function is as follows. Fluoride-specific ion channel. Important for reducing fluoride concentration in the cell, thus reducing its toxicity. In Prochlorococcus marinus (strain NATL2A), this protein is Fluoride-specific ion channel FluC 1.